The sequence spans 67 residues: UPF0434 protein Reut_A0592 (67 aa).

This sequence belongs to the UPF0434 family.

In Cupriavidus pinatubonensis (strain JMP 134 / LMG 1197) (Cupriavidus necator (strain JMP 134)), this protein is UPF0434 protein Reut_A0592.